A 327-amino-acid polypeptide reads, in one-letter code: Zinc transport protein ZntB (327 aa).

Residues 1-273 are Cytoplasmic-facing; it reads MEAIKGSDVN…ARRTYTMSLM (273 aa). A helical transmembrane segment spans residues 274–294; it reads AMVFLPSTFLTGLFGVNLGGI. Topologically, residues 295-300 are periplasmic; the sequence is PGGGWQ. A helical transmembrane segment spans residues 301 to 321; it reads FGFSIFCILLVVLIGGVALWL. Topologically, residues 322–327 are cytoplasmic; sequence HRSKWL.

It belongs to the CorA metal ion transporter (MIT) (TC 1.A.35) family.

The protein localises to the cell inner membrane. The enzyme catalyses Zn(2+)(out) + H(+)(out) = Zn(2+)(in) + H(+)(in). In terms of biological role, zinc transporter. Acts as a Zn(2+):proton symporter, which likely mediates zinc ion uptake. The polypeptide is Zinc transport protein ZntB (Escherichia coli O6:K15:H31 (strain 536 / UPEC)).